The following is a 577-amino-acid chain: Hemagglutinin-neuraminidase (577 aa).

Residues 1-22 (MDRAVSQVALENDEREAKNTWR) are Intravirion-facing. Residues 23–45 (LIFRIAILLLTVVTLATSVASLV) traverse the membrane as a helical segment. Topologically, residues 46–571 (YSMGASTPSD…LVEILKNDGV (526 aa)) are virion surface. Residues N119 and N144 are each glycosylated (N-linked (GlcNAc...) asparagine; by host). The important for interaction with fusion/F protein stretch occupies residues 124-152 (GAPIHDPDFIGGIGKELIVDNASDVTSFY). Cystine bridges form between C172/C196, C186/C247, and C238/C251. Residues 234–239 (NRKSCS) form an involved in neuraminidase activity region. 2 N-linked (GlcNAc...) asparagine; by host glycosylation sites follow: N341 and N433. Intrachain disulfides connect C344–C461 and C455–C465. Residues N481 and N538 are each glycosylated (N-linked (GlcNAc...) asparagine; by host). A disulfide bridge connects residues C531 and C542.

Belongs to the paramyxoviruses hemagglutinin-neuraminidase family. As to quaternary structure, homotetramer; composed of disulfide-linked homodimers. Interacts with F protein trimer. Interacts with host CG-1B; this interaction inhibits viral adsorption and replication rather than internalization.

It localises to the virion membrane. Its subcellular location is the host cell membrane. The enzyme catalyses Hydrolysis of alpha-(2-&gt;3)-, alpha-(2-&gt;6)-, alpha-(2-&gt;8)- glycosidic linkages of terminal sialic acid residues in oligosaccharides, glycoproteins, glycolipids, colominic acid and synthetic substrates.. Mediates the viral entry into the host cell together with fusion/F protein. Attaches the virus to sialic acid-containing cell receptors and thereby initiates infection. Binding of HN protein to the receptor induces a conformational change that allows the F protein to trigger virion/cell membranes fusion. In terms of biological role, neuraminidase activity ensures the efficient spread of the virus by dissociating the mature virions from the neuraminic acid containing glycoproteins. The sequence is that of Hemagglutinin-neuraminidase (HN) from Gallus gallus (Chicken).